The sequence spans 79 residues: MKAPATTLILVMSLISVLWATPDLEEGDLLAELGDLIATDDEYPMKPEERGCKLTFWKCKNKKECCGWNACALGICMPR.

An N-terminal signal peptide occupies residues 1 to 20 (MKAPATTLILVMSLISVLWA). A propeptide spanning residues 21–50 (TPDLEEGDLLAELGDLIATDDEYPMKPEER) is cleaved from the precursor. 3 cysteine pairs are disulfide-bonded: C52–C66, C59–C71, and C65–C76.

Belongs to the neurotoxin 15 family. 01 (magi-5) subfamily. As to expression, expressed by the venom gland.

The protein resides in the secreted. Its function is as follows. Insect and vertebrate active toxin. Binds to site 4 of mammalian voltage-gated sodium channels and shifts the activation voltage of the mammalian Nav1.2a/SCN2A channel to more hyperpolarized voltages, whereas the insect channel, DmNav1 (para), is not affected. Competes for binding at site 3 of the insect sodium channel. Causes temporary paralysis when injected into lepidopteran larvae at 8.6 nmol/g. A low intracranial injection dose into mice causes lacrimation, closure of the eyes and sweating. A high injection dose causes extensive lacrimation and death. This chain is Beta-hexatoxin-Mg1a, found in Macrothele gigas (Japanese funnel web spider).